The sequence spans 214 residues: UPF0690 protein C1orf52 homolog (214 aa).

Disordered stretches follow at residues M1–K66 and D81–D214. Low complexity predominate over residues P32–Q44. Basic and acidic residues-rich tracts occupy residues R49–F61 and D81–V97. Acidic residues predominate over residues E152 to D165. A Phosphoserine modification is found at S162. Composition is skewed to basic and acidic residues over residues V179–I192 and N200–D214.

Belongs to the UPF0690 family.

The protein is UPF0690 protein C1orf52 homolog of Danio rerio (Zebrafish).